Consider the following 400-residue polypeptide: Multidrug resistance protein MdtH (400 aa).

10 consecutive transmembrane segments (helical) span residues Tyr13–Ile33, Ser34–Leu54, Pro99–Phe116, Leu139–Leu159, Leu165–Leu185, Val214–Val234, Ala244–Ala264, Phe289–Leu309, Leu340–Gly360, and Leu365–His385.

This sequence belongs to the major facilitator superfamily. DHA1 family. MdtH (TC 2.A.1.2.21) subfamily.

The protein resides in the cell inner membrane. The protein is Multidrug resistance protein MdtH of Proteus mirabilis (strain HI4320).